The following is a 421-amino-acid chain: ATP-dependent RNA helicase RhlB (421 aa).

Positions glutamine 9–alanine 37 match the Q motif motif. One can recognise a Helicase ATP-binding domain in the interval leucine 40 to isoleucine 219. Residue alanine 53–threonine 60 participates in ATP binding. Positions aspartate 165 to aspartate 168 match the DEAD box motif. In terms of domain architecture, Helicase C-terminal spans arginine 245–methionine 390. The interval aspartate 392–glycine 421 is disordered. Over residues proline 402–proline 414 the composition is skewed to low complexity.

It belongs to the DEAD box helicase family. RhlB subfamily. Component of the RNA degradosome, which is a multiprotein complex involved in RNA processing and mRNA degradation.

Its subcellular location is the cytoplasm. It carries out the reaction ATP + H2O = ADP + phosphate + H(+). In terms of biological role, DEAD-box RNA helicase involved in RNA degradation. Has RNA-dependent ATPase activity and unwinds double-stranded RNA. The sequence is that of ATP-dependent RNA helicase RhlB from Escherichia fergusonii (strain ATCC 35469 / DSM 13698 / CCUG 18766 / IAM 14443 / JCM 21226 / LMG 7866 / NBRC 102419 / NCTC 12128 / CDC 0568-73).